The primary structure comprises 394 residues: Protein NDRG1 (394 aa).

At S2 the chain carries N-acetylserine. Phosphoserine is present on residues S2, S319, and S326. The disordered stretch occupies residues 325-394 (RSRTASGSSV…AGPKSMEVSC (70 aa)). Positions 327–339 (RTASGSSVTSLEG) are enriched in polar residues. A Phosphothreonine modification is found at T328. Position 330 is a phosphoserine (S330). Phosphoserine; by SGK1 is present on S332. S333 carries the post-translational modification Phosphoserine. A Phosphothreonine modification is found at T335. S336 is modified (phosphoserine). A run of 3 repeats spans residues 339–348 (GTRSRSHTSE), 349–358 (GPRSRSHTSE), and 359–368 (GSRSRSHTSE). The tract at residues 339–368 (GTRSRSHTSEGPRSRSHTSEGSRSRSHTSE) is 3 X 10 AA tandem repeats of G-[PST]-R-S-R-S-H-T-S-E. T340 is modified (phosphothreonine). At S342 the chain carries Phosphoserine. Residues 345–371 (HTSEGPRSRSHTSEGSRSRSHTSEDAR) are compositionally biased toward basic and acidic residues. T346 bears the Phosphothreonine mark. S352 bears the Phosphoserine mark. T356 bears the Phosphothreonine; by SGK1 mark. A phosphoserine mark is found at S362 and S364. A phosphothreonine mark is found at T366 and T375. Polar residues predominate over residues 374–386 (ITPSSGATGNNAG).

This sequence belongs to the NDRG family. In terms of assembly, interacts with RAB4A (membrane-bound form); the interaction involves NDRG1 in vesicular recycling of CDH1. Interacts with APOA1, APOA2, PRA1 and RTN1. Post-translationally, under stress conditions, phosphorylated in the C-terminal on many serine and threonine residues. Phosphorylated in vitro by PKA. Phosphorylation enhanced by increased intracellular cAMP levels. Homocysteine induces dephosphorylation. Phosphorylation by SGK1 is cell cycle dependent.

Its subcellular location is the cytoplasm. The protein localises to the cytosol. It localises to the cytoskeleton. It is found in the microtubule organizing center. The protein resides in the centrosome. Its subcellular location is the nucleus. The protein localises to the cell membrane. Stress-responsive protein involved in hormone responses, cell growth, and differentiation. Acts as a tumor suppressor in many cell types. Necessary but not sufficient for p53/TP53-mediated caspase activation and apoptosis. Has a role in cell trafficking notably of the Schwann cell and is necessary for the maintenance and development of the peripheral nerve myelin sheath. Required for vesicular recycling of CDH1 and TF. May also function in lipid trafficking. Protects cells from spindle disruption damage. Functions in p53/TP53-dependent mitotic spindle checkpoint. Regulates microtubule dynamics and maintains euploidy. This is Protein NDRG1 (Ndrg1) from Rattus norvegicus (Rat).